The following is a 1082-amino-acid chain: RhoGEF domain-containing protein gxcI (1082 aa).

Positions 1–15 (MRKNSTSNPSPSHQF) are enriched in polar residues. Disordered stretches follow at residues 1-29 (MRKNSTSNPSPSHQFLTPPKNTTTVVNNN), 59-78 (DKNQQQQQQQQQQTHQVLPQ), 91-394 (YNEQ…VTSL), 438-488 (KQAS…SVSN), and 504-524 (INSFNSDDSNNSNNSNSSLSL). 5 stretches are compositionally biased toward low complexity: residues 20 to 29 (KNTTTVVNNN), 62 to 71 (QQQQQQQQQQ), 96 to 109 (PSSSSSTASSSSSP), 116 to 160 (LLST…SGSP), and 170 to 184 (PTILSPLPSPRRQLP). Residues 185–206 (TRPPSPLPKLPSRPTSPVPPNP) are compositionally biased toward pro residues. Low complexity predominate over residues 211–244 (NTTTTNNNNNNNNNNNNNNNNNNNNNNNNNNNNN). Over residues 262–276 (PIPPPNDKPAPPPRP) the composition is skewed to pro residues. The segment covering 282–366 (TLTTPPTIAT…NNNNNSNNNK (85 aa)) has biased composition (low complexity). Over residues 367 to 379 (PLPPTSTKPPRPK) the composition is skewed to pro residues. Over residues 450–473 (SSLSLSTTPTSVSPSTPSSANPTP) the composition is skewed to low complexity. The DH domain occupies 622 to 817 (SFNKVIKEII…EKIVNDINGK (196 aa)). The tract at residues 838 to 994 (QQLRDQTFLK…NDIDEAINIL (157 aa)) is PH-like. Disordered regions lie at residues 920–961 (NNNN…NSTP) and 1017–1060 (NNNN…NSNN).

In terms of biological role, GTPase-activating protein. The chain is RhoGEF domain-containing protein gxcI (gxcI) from Dictyostelium discoideum (Social amoeba).